The primary structure comprises 371 residues: Ferrochelatase (371 aa).

Positions 218 and 299 each coordinate Fe cation.

This sequence belongs to the ferrochelatase family.

It localises to the cytoplasm. The enzyme catalyses heme b + 2 H(+) = protoporphyrin IX + Fe(2+). It participates in porphyrin-containing compound metabolism; protoheme biosynthesis; protoheme from protoporphyrin-IX: step 1/1. Catalyzes the ferrous insertion into protoporphyrin IX. The protein is Ferrochelatase of Cupriavidus metallidurans (strain ATCC 43123 / DSM 2839 / NBRC 102507 / CH34) (Ralstonia metallidurans).